Here is a 159-residue protein sequence, read N- to C-terminus: Nucleotide-binding protein PSPTO_4393 (159 aa).

The protein belongs to the YajQ family.

In terms of biological role, nucleotide-binding protein. This chain is Nucleotide-binding protein PSPTO_4393, found in Pseudomonas syringae pv. tomato (strain ATCC BAA-871 / DC3000).